Here is a 480-residue protein sequence, read N- to C-terminus: Argininosuccinate lyase (480 aa).

The interval 1 to 20 (MTQQDGGQAGQAEPTKLWGG) is disordered.

Belongs to the lyase 1 family. Argininosuccinate lyase subfamily.

It localises to the cytoplasm. The enzyme catalyses 2-(N(omega)-L-arginino)succinate = fumarate + L-arginine. It participates in amino-acid biosynthesis; L-arginine biosynthesis; L-arginine from L-ornithine and carbamoyl phosphate: step 3/3. The polypeptide is Argininosuccinate lyase (Saccharopolyspora erythraea (strain ATCC 11635 / DSM 40517 / JCM 4748 / NBRC 13426 / NCIMB 8594 / NRRL 2338)).